The sequence spans 131 residues: Cytochrome c-552 (131 aa).

Heme c contacts are provided by C11, C14, H15, and M69.

Post-translationally, binds 1 heme c group covalently per subunit.

This monoheme basic protein appears to function as an electron donor to cytochrome oxidase in T.thermophilus. In Thermus thermophilus, this protein is Cytochrome c-552 (cycA).